A 428-amino-acid polypeptide reads, in one-letter code: Light-independent protochlorophyllide reductase subunit N (428 aa).

Cys-31, Cys-56, and Cys-117 together coordinate [4Fe-4S] cluster.

It belongs to the BchN/ChlN family. In terms of assembly, protochlorophyllide reductase is composed of three subunits; BchL, BchN and BchB. Forms a heterotetramer of two BchB and two BchN subunits. Requires [4Fe-4S] cluster as cofactor.

The enzyme catalyses chlorophyllide a + oxidized 2[4Fe-4S]-[ferredoxin] + 2 ADP + 2 phosphate = protochlorophyllide a + reduced 2[4Fe-4S]-[ferredoxin] + 2 ATP + 2 H2O. Its pathway is porphyrin-containing compound metabolism; bacteriochlorophyll biosynthesis (light-independent). Component of the dark-operative protochlorophyllide reductase (DPOR) that uses Mg-ATP and reduced ferredoxin to reduce ring D of protochlorophyllide (Pchlide) to form chlorophyllide a (Chlide). This reaction is light-independent. The NB-protein (BchN-BchB) is the catalytic component of the complex. In Rhodopseudomonas palustris (strain BisB18), this protein is Light-independent protochlorophyllide reductase subunit N.